We begin with the raw amino-acid sequence, 245 residues long: Phosducin (245 aa).

The tract at residues 1 to 67 (MEEARRQSLE…SRDDKDSKER (67 aa)) is disordered. The 241-residue stretch at 1-241 (MEEARRQSLE…IHALEQTSME (241 aa)) folds into the Phosducin domain. Positions 58-67 (SRDDKDSKER) are enriched in basic and acidic residues. At serine 73 the chain carries Phosphoserine; by PKA. The thioredoxin fold stretch occupies residues 111-245 (YGFVYELETG…EQTSMEEDVE (135 aa)).

Belongs to the phosducin family. In terms of assembly, forms a complex with the beta and gamma subunits of the GTP-binding protein, transducin. Interacts with CRX. In terms of processing, light-induced changes in cyclic nucleotide levels modulate the phosphorylation of this protein by cAMP kinase.

The protein localises to the cytoplasm. It is found in the cytosol. Its subcellular location is the nucleus. The protein resides in the cell projection. It localises to the cilium. The protein localises to the photoreceptor outer segment. It is found in the photoreceptor inner segment. May participate in the regulation of visual phototransduction or in the integration of photoreceptor metabolism. Inhibits the transcriptional activation activity of the cone-rod homeobox CRX. This is Phosducin (PDC) from Equus caballus (Horse).